The sequence spans 274 residues: Urease accessory protein UreD (274 aa).

It belongs to the UreD family. UreD, UreF and UreG form a complex that acts as a GTP-hydrolysis-dependent molecular chaperone, activating the urease apoprotein by helping to assemble the nickel containing metallocenter of UreC. The UreE protein probably delivers the nickel.

It localises to the cytoplasm. Its function is as follows. Required for maturation of urease via the functional incorporation of the urease nickel metallocenter. The sequence is that of Urease accessory protein UreD from Enterobacter sp. (strain 638).